We begin with the raw amino-acid sequence, 564 residues long: Dihydroxy-acid dehydratase (564 aa).

D80 lines the Mg(2+) pocket. Residue C121 coordinates [2Fe-2S] cluster. Mg(2+) is bound by residues D122 and K123. K123 is modified (N6-carboxylysine). C194 serves as a coordination point for [2Fe-2S] cluster. E447 is a Mg(2+) binding site. The Proton acceptor role is filled by S473.

This sequence belongs to the IlvD/Edd family. In terms of assembly, homodimer. The cofactor is [2Fe-2S] cluster. Mg(2+) serves as cofactor.

It carries out the reaction (2R)-2,3-dihydroxy-3-methylbutanoate = 3-methyl-2-oxobutanoate + H2O. The catalysed reaction is (2R,3R)-2,3-dihydroxy-3-methylpentanoate = (S)-3-methyl-2-oxopentanoate + H2O. It participates in amino-acid biosynthesis; L-isoleucine biosynthesis; L-isoleucine from 2-oxobutanoate: step 3/4. Its pathway is amino-acid biosynthesis; L-valine biosynthesis; L-valine from pyruvate: step 3/4. Functions in the biosynthesis of branched-chain amino acids. Catalyzes the dehydration of (2R,3R)-2,3-dihydroxy-3-methylpentanoate (2,3-dihydroxy-3-methylvalerate) into 2-oxo-3-methylpentanoate (2-oxo-3-methylvalerate) and of (2R)-2,3-dihydroxy-3-methylbutanoate (2,3-dihydroxyisovalerate) into 2-oxo-3-methylbutanoate (2-oxoisovalerate), the penultimate precursor to L-isoleucine and L-valine, respectively. In Listeria innocua serovar 6a (strain ATCC BAA-680 / CLIP 11262), this protein is Dihydroxy-acid dehydratase.